Consider the following 297-residue polypeptide: MRCLALDIGGTKIASAIVTDGKIEQRQQIATPQADAANAMHDTLANILALYAGQFDYVAVASTGIINHGVLTALNPKNLGGLAEFPLKESIARHTDKPIGLLNDVQAAACAEYKDEDKNAVQNFVFITVSTGVGGGIILERRLLTEPNGVAGHIGHTLADPNGPVCGCGRVGCVEAVAAGRAIEAVSSQWNPPCTPKQAFELFRKNDEKATALIQRSASAIANLIADLVIGLDVQKVVVGGSVGLAEGYLPLVKQYLNMMPHFYHCTVEQARHGQDAGLLGAAWWVADCLKQGVHLK.

Residues 5–12 (ALDIGGTK) and 132–139 (GVGGGIIL) contribute to the ATP site. Residues H156, C166, C168, and C173 each contribute to the Zn(2+) site.

It belongs to the ROK (NagC/XylR) family. NanK subfamily. Homodimer.

The enzyme catalyses an N-acyl-D-mannosamine + ATP = an N-acyl-D-mannosamine 6-phosphate + ADP + H(+). It functions in the pathway amino-sugar metabolism; N-acetylneuraminate degradation; D-fructose 6-phosphate from N-acetylneuraminate: step 2/5. In terms of biological role, catalyzes the phosphorylation of N-acetylmannosamine (ManNAc) to ManNAc-6-P. The chain is N-acetylmannosamine kinase from Pasteurella multocida (strain Pm70).